Reading from the N-terminus, the 255-residue chain is Lipoprotein-releasing system ATP-binding protein LolD 2 (255 aa).

Residues 9–254 (LEARGIRKSY…SDSAKLETVA (246 aa)) enclose the ABC transporter domain. Residue 45–52 (GRSGSGKS) participates in ATP binding.

It belongs to the ABC transporter superfamily. Lipoprotein translocase (TC 3.A.1.125) family. As to quaternary structure, the complex is composed of two ATP-binding proteins (LolD) and two transmembrane proteins (LolC and LolE).

It is found in the cell inner membrane. In terms of biological role, part of the ABC transporter complex LolCDE involved in the translocation of mature outer membrane-directed lipoproteins, from the inner membrane to the periplasmic chaperone, LolA. Responsible for the formation of the LolA-lipoprotein complex in an ATP-dependent manner. This chain is Lipoprotein-releasing system ATP-binding protein LolD 2, found in Rhodopirellula baltica (strain DSM 10527 / NCIMB 13988 / SH1).